Here is a 75-residue protein sequence, read N- to C-terminus: SPbeta prophage-derived uncharacterized protein YorX (75 aa).

This Bacillus subtilis (strain 168) protein is SPbeta prophage-derived uncharacterized protein YorX (yorX).